A 274-amino-acid polypeptide reads, in one-letter code: Serine/threonine-protein kinase 1 (274 aa).

Positions 16 to 273 (AVLAPKVVNG…HSFLASRHDY (258 aa)) constitute a Protein kinase domain. Residues 22–30 (VVNGRFGKM) and K46 contribute to the ATP site. The active-site Proton acceptor is the D134.

Belongs to the protein kinase superfamily. Ser/Thr protein kinase family.

It catalyses the reaction L-seryl-[protein] + ATP = O-phospho-L-seryl-[protein] + ADP + H(+). The catalysed reaction is L-threonyl-[protein] + ATP = O-phospho-L-threonyl-[protein] + ADP + H(+). This chain is Serine/threonine-protein kinase 1 (PK1), found in Orgyia pseudotsugata multicapsid polyhedrosis virus (OpMNPV).